The primary structure comprises 1405 residues: DNA-directed RNA polymerase subunit beta' (1405 aa).

Zn(2+) contacts are provided by cysteine 70, cysteine 72, cysteine 85, and cysteine 88. 3 residues coordinate Mg(2+): aspartate 460, aspartate 462, and aspartate 464. Residues cysteine 815, cysteine 890, cysteine 897, and cysteine 900 each contribute to the Zn(2+) site. The tract at residues 1375–1405 (GLTDSEMETLSGKPAGAEPVAALADAGADEE) is disordered.

The protein belongs to the RNA polymerase beta' chain family. The RNAP catalytic core consists of 2 alpha, 1 beta, 1 beta' and 1 omega subunit. When a sigma factor is associated with the core the holoenzyme is formed, which can initiate transcription. The cofactor is Mg(2+). Requires Zn(2+) as cofactor.

The catalysed reaction is RNA(n) + a ribonucleoside 5'-triphosphate = RNA(n+1) + diphosphate. DNA-dependent RNA polymerase catalyzes the transcription of DNA into RNA using the four ribonucleoside triphosphates as substrates. The sequence is that of DNA-directed RNA polymerase subunit beta' from Xanthomonas oryzae pv. oryzae (strain MAFF 311018).